Here is a 255-residue protein sequence, read N- to C-terminus: Probable membrane transporter protein HI_0198 (255 aa).

8 consecutive transmembrane segments (helical) span residues 7 to 27 (LLAI…IAGG), 28 to 48 (GGLI…MALG), 76 to 96 (IWFI…LIQS), 99 to 119 (VAIF…YFLF), 132 to 152 (LSYL…DGFF), 153 to 173 (GPGT…FNLP), 191 to 211 (FALF…MMAG), and 235 to 255 (VVIM…WFHF).

It belongs to the 4-toluene sulfonate uptake permease (TSUP) (TC 2.A.102) family.

It is found in the cell membrane. This chain is Probable membrane transporter protein HI_0198, found in Haemophilus influenzae (strain ATCC 51907 / DSM 11121 / KW20 / Rd).